We begin with the raw amino-acid sequence, 405 residues long: L-rhamnonate dehydratase (405 aa).

H33 and R59 together coordinate substrate. Residues D226, E252, and E280 each coordinate Mg(2+). H329 serves as the catalytic Proton acceptor. Substrate is bound at residue E349.

This sequence belongs to the mandelate racemase/muconate lactonizing enzyme family. RhamD subfamily. Homooctamer; tetramer of dimers. Requires Mg(2+) as cofactor.

The catalysed reaction is L-rhamnonate = 2-dehydro-3-deoxy-L-rhamnonate + H2O. Functionally, catalyzes the dehydration of L-rhamnonate to 2-keto-3-deoxy-L-rhamnonate (KDR). In Salmonella paratyphi C (strain RKS4594), this protein is L-rhamnonate dehydratase.